Reading from the N-terminus, the 298-residue chain is Estradiol 17-beta-dehydrogenase 11 (298 aa).

An N-terminal signal peptide occupies residues 1–21; it reads MKYLLDLILLLPLLIVFSIES. Residue 40-64 participates in NADP(+) binding; that stretch reads LITGAGHGIGRLTAYEFAKLNTKLV. S172 is a substrate binding site. Residue Y185 is the Proton acceptor of the active site.

Belongs to the short-chain dehydrogenases/reductases (SDR) family. 17-beta-HSD 3 subfamily. In terms of tissue distribution, expressed in the liver (at protein level). Also expressed in the intestine and, at much lower levels, in the kidney.

Its subcellular location is the endoplasmic reticulum. It is found in the lipid droplet. It carries out the reaction 17beta-estradiol + NAD(+) = estrone + NADH + H(+). It catalyses the reaction 17beta-estradiol + NADP(+) = estrone + NADPH + H(+). Its function is as follows. Can convert androstan-3-alpha,17-beta-diol (3-alpha-diol) to androsterone in vitro, suggesting that it may participate in androgen metabolism during steroidogenesis. May act by metabolizing compounds that stimulate steroid synthesis and/or by generating metabolites that inhibit it. Has no activity toward DHEA (dehydroepiandrosterone), or A-dione (4-androste-3,17-dione), and only a slight activity toward testosterone to A-dione. The chain is Estradiol 17-beta-dehydrogenase 11 (Hsd17b11) from Mus musculus (Mouse).